The sequence spans 214 residues: Osteoclast-stimulating factor 1 (214 aa).

Residues 12–71 enclose the SH3 domain; it reads GQVKVFRALYTFEPRTPDELYFEEGDILYIADMSDTNWWKGTCKGKTGLIPSNYVAEQAE. 3 ANK repeats span residues 72-101, 105-135, and 139-168; these read SIDN…GVNG, AGST…ELNQ, and LGDT…RTDL.

It is found in the cytoplasm. Induces bone resorption, acting probably through a signaling cascade which results in the secretion of factor(s) enhancing osteoclast formation and activity. This Xenopus laevis (African clawed frog) protein is Osteoclast-stimulating factor 1 (ostf1).